The following is an 885-amino-acid chain: MASQYPGHQLDDIPSTNVYRPPPRHEDDEAEHALLHQNSAYQSQYDDPHSRPLTPGQESVYTLNESYVGGDPSKVPVTSYNPQYTQPYGQGYGMNNSRPGFPTPGPPDPIDRTDSTEAWRERQAPGFGTIKRYATRKVKLVQGSVLSIDYPVPSAIQNAIQAKYRNDLEGGSEEFTHMRYTAATCDPDDFTLKNGYNLRPAMYNRHTELLIAITYYNEDKVLTARTLHGVMQNIRDIVNLKKSEFWNKGGPAWQKIVVCLVFDGIDPCDKNTLDVLATIGVYQDGVMKKDVDGKETVAHIFEYTTQLSVTANQQLIRPNDNDATSLPPAQMIFCLKQKNRKKINSHRWLFNAFGRILNPEVCILLDAGTKPGSKSLMALWQAFYNDKDLGGACGEIHAMLGPGGVFGRKLLNPLVAAQNFEYKISNILDKPLESSFGYVSVLPGAFSAYRFRAIMGRPLEQYFHGDHTLSKTLGKKGIEGMNIFKKNMFLAEDRILCFELVAKAGSKWHLSYVKASKAETDVPEGPPEFIGQRRRWLNGSFAASMYCLMHFSRMYKSGHNLIRMFFLHIQMIYNIVSVLLSWFSLASFWLTTKVLMDLVGQPSTSNDNAAFPFGNTATPIINTILQYLYLAFLLLQFILALGNRPKGSKVAYIISFCLFGLIQLYVIVLSMYLVVRAFTTKNGTDIVTNEGANEFVKSFFASTGPGIVIIALAATFGLYFVASFLYMDPWHMFTSFAQYLLLMPSFINILMIYAFSNWHDVSWGTKGSDKADVLPSAQTKKDEKSKTAVVEEVDKPQADIDSQFEATVRRALAPYKPPEEKEEKTLEDSYKNFRTRLVATWIFSNALLAVAITSDSLDRFGFTSEPLRGPAISSRRFCGLLRPCL.

The tract at residues 1–59 is disordered; that stretch reads MASQYPGHQLDDIPSTNVYRPPPRHEDDEAEHALLHQNSAYQSQYDDPHSRPLTPGQES. The span at 23–34 shows a compositional bias: basic and acidic residues; that stretch reads PRHEDDEAEHAL. Positions 36–45 are enriched in polar residues; the sequence is HQNSAYQSQY. Transmembrane regions (helical) follow at residues 565-585, 620-640, 650-670, 707-727, 735-755, and 837-857; these read FFLH…WFSL, IINT…FILA, VAYI…IVLS, IVII…FLYM, SFAQ…IYAF, and LVAT…SDSL.

Belongs to the chitin synthase family. Class III subfamily.

It is found in the cell membrane. The enzyme catalyses [(1-&gt;4)-N-acetyl-beta-D-glucosaminyl](n) + UDP-N-acetyl-alpha-D-glucosamine = [(1-&gt;4)-N-acetyl-beta-D-glucosaminyl](n+1) + UDP + H(+). Its function is as follows. Polymerizes chitin, a structural polymer of the cell wall and septum, by transferring the sugar moiety of UDP-GlcNAc to the non-reducing end of the growing chitin polymer. Is not only stable at different pH, but is also able to tolerate a broad temperature range. With CHS2, plays an important role in virulence. The polypeptide is Chitin synthase 3 (Exophiala dermatitidis (Black yeast-like fungus)).